The sequence spans 424 residues: Glutamyl-tRNA reductase (424 aa).

Residues 49–52 (TCNR), Ser105, 110–112 (EPQ), and Gln116 contribute to the substrate site. The Nucleophile role is filled by Cys50. An NADP(+)-binding site is contributed by 185-190 (GSGETA).

It belongs to the glutamyl-tRNA reductase family. Homodimer.

It catalyses the reaction (S)-4-amino-5-oxopentanoate + tRNA(Glu) + NADP(+) = L-glutamyl-tRNA(Glu) + NADPH + H(+). It functions in the pathway porphyrin-containing compound metabolism; protoporphyrin-IX biosynthesis; 5-aminolevulinate from L-glutamyl-tRNA(Glu): step 1/2. Catalyzes the NADPH-dependent reduction of glutamyl-tRNA(Glu) to glutamate 1-semialdehyde (GSA). This chain is Glutamyl-tRNA reductase, found in Legionella pneumophila (strain Corby).